The sequence spans 436 residues: Gustatory receptor for sugar taste 61a (436 aa).

Residues M1 to S78 lie on the Cytoplasmic side of the membrane. Residues I79–A99 traverse the membrane as a helical segment. The Extracellular segment spans residues N100–N111. Residues I112–A132 traverse the membrane as a helical segment. The Cytoplasmic portion of the chain corresponds to R133–K164. Residues V165–A185 traverse the membrane as a helical segment. Residues S186–E214 are Extracellular-facing. N-linked (GlcNAc...) asparagine glycosylation occurs at N201. The chain crosses the membrane as a helical span at residues F215–L235. Residues N236–G237 lie on the Cytoplasmic side of the membrane. A helical transmembrane segment spans residues A238 to A258. Over Q259–N304 the chain is Extracellular. Residues I305–F325 traverse the membrane as a helical segment. The Cytoplasmic segment spans residues T326 to Y334. Residues V335–A355 traverse the membrane as a helical segment. Over S356–A436 the chain is Extracellular.

It belongs to the insect chemoreceptor superfamily. Gustatory receptor (GR) family. Gr5a subfamily. In terms of tissue distribution, expressed in sweet sensing neurons of classical chemosensory sensilla, but also in two supersensitive neurons of atypical taste sensilla.

The protein localises to the cell membrane. Its function is as follows. One of the few identified sugar gustatory receptors identified so far with glucose being its primary ligand and which mediates acceptance behavior. In Drosophila melanogaster (Fruit fly), this protein is Gustatory receptor for sugar taste 61a (Gr61a).